The sequence spans 98 residues: MGEKDIIRDLYEVILDRRQKQPDGSYTAYLFEQGEDKILKKIGEEAAEVLIAAKNGGGAALVGEMADLVYHLLVLLAWHGLAPEDVLAELAARRQKKS.

Belongs to the PRA-PH family.

Its subcellular location is the cytoplasm. The enzyme catalyses 1-(5-phospho-beta-D-ribosyl)-ATP + H2O = 1-(5-phospho-beta-D-ribosyl)-5'-AMP + diphosphate + H(+). It participates in amino-acid biosynthesis; L-histidine biosynthesis; L-histidine from 5-phospho-alpha-D-ribose 1-diphosphate: step 2/9. In Pelotomaculum thermopropionicum (strain DSM 13744 / JCM 10971 / SI), this protein is Phosphoribosyl-ATP pyrophosphatase.